A 190-amino-acid polypeptide reads, in one-letter code: Histone H5 (190 aa).

The interval 1 to 29 (MTESLVLSPAPAKPKRVKASRRSASHPTY) is disordered. Positions 13–24 (KPKRVKASRRSA) are enriched in basic residues. Residues Ser-23, Ser-30, Ser-146, and Ser-167 each carry the phosphoserine modification. In terms of domain architecture, H15 spans 25 to 98 (SHPTYSEMIA…GASGSFRLAK (74 aa)). Residues 87-190 (GVGASGSFRL…SGARKSPKKK (104 aa)) are disordered. Residues 104–190 (RSPGKKKKAV…SGARKSPKKK (87 aa)) show a composition bias toward basic residues.

This sequence belongs to the histone H1/H5 family. As to expression, erythroid cells.

The protein localises to the nucleus. The protein resides in the chromosome. Functionally, histone H5 performs the same function as H1, being necessary for the condensation of nucleosome chains into higher order structures, and replaces histone H1 in certain cells. This is Histone H5 from Gallus gallus (Chicken).